Reading from the N-terminus, the 322-residue chain is Glycerol-3-phosphate dehydrogenase [NAD(P)+] (322 aa).

NADPH-binding residues include W13, H33, and K99. Positions 99, 127, and 129 each coordinate sn-glycerol 3-phosphate. A131 serves as a coordination point for NADPH. Positions 182, 235, 245, 246, and 247 each coordinate sn-glycerol 3-phosphate. Residue K182 is the Proton acceptor of the active site. R246 provides a ligand contact to NADPH. E272 contacts NADPH.

The protein belongs to the NAD-dependent glycerol-3-phosphate dehydrogenase family.

It is found in the cytoplasm. It catalyses the reaction sn-glycerol 3-phosphate + NAD(+) = dihydroxyacetone phosphate + NADH + H(+). The catalysed reaction is sn-glycerol 3-phosphate + NADP(+) = dihydroxyacetone phosphate + NADPH + H(+). The protein operates within membrane lipid metabolism; glycerophospholipid metabolism. Functionally, catalyzes the reduction of the glycolytic intermediate dihydroxyacetone phosphate (DHAP) to sn-glycerol 3-phosphate (G3P), the key precursor for phospholipid synthesis. In Ruthia magnifica subsp. Calyptogena magnifica, this protein is Glycerol-3-phosphate dehydrogenase [NAD(P)+].